Here is a 580-residue protein sequence, read N- to C-terminus: Glutamine--tRNA ligase (580 aa).

Positions 51–61 (PEPNGYLHIGH) match the 'HIGH' region motif. ATP is bound by residues 52 to 54 (EPN) and 58 to 64 (HIGHAKS). 2 residues coordinate L-glutamine: Asp84 and Tyr233. ATP contacts are provided by residues Thr252 and 287–288 (RL). The short motif at 294–298 (ITSKR) is the 'KMSKS' region element.

This sequence belongs to the class-I aminoacyl-tRNA synthetase family. In terms of assembly, monomer.

The protein resides in the cytoplasm. The enzyme catalyses tRNA(Gln) + L-glutamine + ATP = L-glutaminyl-tRNA(Gln) + AMP + diphosphate. The sequence is that of Glutamine--tRNA ligase from Ralstonia nicotianae (strain ATCC BAA-1114 / GMI1000) (Ralstonia solanacearum).